The chain runs to 376 residues: Sterol 24-C-methyltransferase (376 aa).

It belongs to the class I-like SAM-binding methyltransferase superfamily. Erg6/SMT family.

The enzyme catalyses zymosterol + S-adenosyl-L-methionine = fecosterol + S-adenosyl-L-homocysteine + H(+). It functions in the pathway steroid metabolism; ergosterol biosynthesis; ergosterol from zymosterol: step 1/5. Its activity is regulated as follows. Substrate analogs 25-azalanosterol and 24(R,S),25-epiminolanosterol act as inhibitors. Sterol 24-C-methyltransferase; part of the third module of ergosterol biosynthesis pathway that includes the late steps of the pathway. ERG6 catalyzes the methyl transfer from S-adenosyl-methionine to the C-24 of zymosterol to form fecosterol. The third module or late pathway involves the ergosterol synthesis itself through consecutive reactions that mainly occur in the endoplasmic reticulum (ER) membrane. Firstly, the squalene synthase ERG9 catalyzes the condensation of 2 farnesyl pyrophosphate moieties to form squalene, which is the precursor of all steroids. Squalene synthase is crucial for balancing the incorporation of farnesyl diphosphate (FPP) into sterol and nonsterol isoprene synthesis. Secondly, the squalene epoxidase ERG1 catalyzes the stereospecific oxidation of squalene to (S)-2,3-epoxysqualene, which is considered to be a rate-limiting enzyme in steroid biosynthesis. Then, the lanosterol synthase ERG7 catalyzes the cyclization of (S)-2,3 oxidosqualene to lanosterol, a reaction that forms the sterol core. In the next steps, lanosterol is transformed to zymosterol through a complex process involving various demethylation, reduction and desaturation reactions. The lanosterol 14-alpha-demethylase ERG11 (also known as CYP51) catalyzes C14-demethylation of lanosterol to produce 4,4'-dimethyl cholesta-8,14,24-triene-3-beta-ol, which is critical for ergosterol biosynthesis. The C-14 reductase ERG24 reduces the C14=C15 double bond of 4,4-dimethyl-cholesta-8,14,24-trienol to produce 4,4-dimethyl-cholesta-8,24-dienol. 4,4-dimethyl-cholesta-8,24-dienol is substrate of the C-4 demethylation complex ERG25-ERG26-ERG27 in which ERG25 catalyzes the three-step monooxygenation required for the demethylation of 4,4-dimethyl and 4alpha-methylsterols, ERG26 catalyzes the oxidative decarboxylation that results in a reduction of the 3-beta-hydroxy group at the C-3 carbon to an oxo group, and ERG27 is responsible for the reduction of the keto group on the C-3. ERG28 has a role as a scaffold to help anchor ERG25, ERG26 and ERG27 to the endoplasmic reticulum and ERG29 regulates the activity of the iron-containing C4-methylsterol oxidase ERG25. Then, the sterol 24-C-methyltransferase ERG6 catalyzes the methyl transfer from S-adenosyl-methionine to the C-24 of zymosterol to form fecosterol. The C-8 sterol isomerase ERG2 catalyzes the reaction which results in unsaturation at C-7 in the B ring of sterols and thus converts fecosterol to episterol. The sterol-C5-desaturase ERG3 then catalyzes the introduction of a C-5 double bond in the B ring to produce 5-dehydroepisterol. The C-22 sterol desaturase ERG5 further converts 5-dehydroepisterol into ergosta-5,7,22,24(28)-tetraen-3beta-ol by forming the C-22(23) double bond in the sterol side chain. Finally, ergosta-5,7,22,24(28)-tetraen-3beta-ol is substrate of the C-24(28) sterol reductase ERG4 to produce ergosterol. This is Sterol 24-C-methyltransferase from Candida albicans (strain SC5314 / ATCC MYA-2876) (Yeast).